We begin with the raw amino-acid sequence, 204 residues long: Thymidine kinase (204 aa).

Residues 23–30 (GSMFSGKT) and 95–98 (DEAQ) each bind ATP. Glu-96 functions as the Proton acceptor in the catalytic mechanism. Cys-152, Cys-155, Cys-184, and Cys-187 together coordinate Zn(2+).

Belongs to the thymidine kinase family. Homotetramer.

The protein resides in the cytoplasm. The catalysed reaction is thymidine + ATP = dTMP + ADP + H(+). The sequence is that of Thymidine kinase from Porphyromonas gingivalis (strain ATCC 33277 / DSM 20709 / CIP 103683 / JCM 12257 / NCTC 11834 / 2561).